Consider the following 693-residue polypeptide: Histone-lysine N-methyltransferase, H3 lysine-9 specific SUVH7 (693 aa).

2 disordered regions span residues 64-99 (WYDG…PPEM) and 111-175 (DSSN…AETE). Residues 129 to 141 (KRGRGRPKGSKNS) constitute a DNA-binding region (a.T hook). The YDG domain occupies 227–373 (GAVPGIHVGD…FKEFRFKLVR (147 aa)). The Pre-SET domain occupies 454–516 (QSLGCQNCRH…HCPTRLVQTG (63 aa)). Cysteine 458, cysteine 461, cysteine 466, cysteine 471, cysteine 473, cysteine 498, cysteine 502, cysteine 504, and cysteine 508 together coordinate Zn(2+). Residues 519–660 (LHLEVFKTRN…PMTELTYDYG (142 aa)) form the SET domain. Residues 529 to 531 (CGW), aspartate 562, tyrosine 564, arginine 614, and 617 to 618 (NH) contribute to the S-adenosyl-L-methionine site. Residues cysteine 620, cysteine 681, cysteine 683, and cysteine 688 each contribute to the Zn(2+) site. Positions 677–693 (GKKTCLCGSVKCRGSFT) constitute a Post-SET domain.

Belongs to the class V-like SAM-binding methyltransferase superfamily. Histone-lysine methyltransferase family. Suvar3-9 subfamily.

Its subcellular location is the nucleus. It is found in the chromosome. The protein localises to the centromere. It carries out the reaction N(6)-methyl-L-lysyl(9)-[histone H3] + S-adenosyl-L-methionine = N(6),N(6)-dimethyl-L-lysyl(9)-[histone H3] + S-adenosyl-L-homocysteine + H(+). It catalyses the reaction L-lysyl(9)-[histone H3] + S-adenosyl-L-methionine = N(6)-methyl-L-lysyl(9)-[histone H3] + S-adenosyl-L-homocysteine + H(+). Histone methyltransferase. Methylates 'Lys-9' of histone H3. H3 'Lys-9' methylation represents a specific tag for epigenetic transcriptional repression. The chain is Histone-lysine N-methyltransferase, H3 lysine-9 specific SUVH7 (SUVH7) from Arabidopsis thaliana (Mouse-ear cress).